Consider the following 325-residue polypeptide: Pyruvate dehydrogenase E1 component subunit beta (325 aa).

Residue Glu60 participates in thiamine diphosphate binding.

As to quaternary structure, heterodimer of an alpha and a beta chain. Thiamine diphosphate serves as cofactor.

The protein localises to the cytoplasm. Its subcellular location is the secreted. It carries out the reaction N(6)-[(R)-lipoyl]-L-lysyl-[protein] + pyruvate + H(+) = N(6)-[(R)-S(8)-acetyldihydrolipoyl]-L-lysyl-[protein] + CO2. Its activity is regulated as follows. Activity of the E1 module is inhibited by the pyruvate dehydrogenase inhibitor PdhI. Functionally, the pyruvate dehydrogenase complex catalyzes the overall conversion of pyruvate to acetyl-CoA and CO(2). It contains multiple copies of three enzymatic components: pyruvate dehydrogenase (E1), dihydrolipoamide acetyltransferase (E2) and lipoamide dehydrogenase (E3). The B.subtilis PDH complex also possesses branched-chain 2-oxoacid dehydrogenase (BCDH) activity. The sequence is that of Pyruvate dehydrogenase E1 component subunit beta from Bacillus subtilis (strain 168).